We begin with the raw amino-acid sequence, 655 residues long: UvrABC system protein B (655 aa).

In terms of domain architecture, Helicase ATP-binding spans 25 to 181 (DGINKGEKEQ…IRKLVFMQYE (157 aa)). 38 to 45 (GVTGSGKT) contributes to the ATP binding site. The Beta-hairpin signature appears at 91 to 114 (YYDYYQPEAYVPRTDTFIDKESSV). Positions 428–590 (QVEDLLGEVK…IVPKTTKRAL (163 aa)) constitute a Helicase C-terminal domain. In terms of domain architecture, UVR spans 615–650 (RLLISDLENDMKEAAAKLDFERAASLRDQIATLKGL).

It belongs to the UvrB family. Forms a heterotetramer with UvrA during the search for lesions. Interacts with UvrC in an incision complex.

The protein resides in the cytoplasm. Its function is as follows. The UvrABC repair system catalyzes the recognition and processing of DNA lesions. A damage recognition complex composed of 2 UvrA and 2 UvrB subunits scans DNA for abnormalities. Upon binding of the UvrA(2)B(2) complex to a putative damaged site, the DNA wraps around one UvrB monomer. DNA wrap is dependent on ATP binding by UvrB and probably causes local melting of the DNA helix, facilitating insertion of UvrB beta-hairpin between the DNA strands. Then UvrB probes one DNA strand for the presence of a lesion. If a lesion is found the UvrA subunits dissociate and the UvrB-DNA preincision complex is formed. This complex is subsequently bound by UvrC and the second UvrB is released. If no lesion is found, the DNA wraps around the other UvrB subunit that will check the other stand for damage. This chain is UvrABC system protein B, found in Methanobrevibacter smithii (strain ATCC 35061 / DSM 861 / OCM 144 / PS).